We begin with the raw amino-acid sequence, 253 residues long: Ribosome-inactivating protein saporin-9 (253 aa).

E176 is a catalytic residue.

It catalyses the reaction Endohydrolysis of the N-glycosidic bond at one specific adenosine on the 28S rRNA.. Functionally, ribosome-inactivating protein of type 1, inhibits protein synthesis in animal cells. In Saponaria officinalis (Common soapwort), this protein is Ribosome-inactivating protein saporin-9 (SAP9).